Reading from the N-terminus, the 386-residue chain is MNVHEYQAKELLRSYGVPVPNGIAAFTVEEAVDAAEQLSGPIKVVKAQIHAGGRGKAGGVKLAKSQEEVKEFATELLGKTLVTHQTGPEGKVIQRLLVEEGCAIDKEYYLGIVLDRVTGRVVIMGSSEGGMDIEEVAEATPEKIIKEVVDPAVGLQAFQARKLAFAMGVPVKLVNKFVGMVTKLYTFFVDKDCSIAEINPLVTTKDGDVLALDAKLNFDSNALYRHADVVALRDETEEDPREVEASKNDLNYIALDGNIGCLVNGAGLAMATMDIIKHFSGDPANFLDVGGGATKEKVTEAFKLILSDENVKGIFVNIFGGIMKCDVIAEGIVAATKEVGLELPLVVRLEGTNVDAGKQILKDSGLAITAATSMADGAEKIAALVK.

One can recognise an ATP-grasp domain in the interval 9 to 244; it reads KELLRSYGVP…ETEEDPREVE (236 aa). Residues K46, 53–55, E99, C102, and E107 contribute to the ATP site; that span reads GRG. Mg(2+) is bound by residues N199 and D213. Residues N264 and 321–323 each bind substrate; that span reads GIM.

The protein belongs to the succinate/malate CoA ligase beta subunit family. Heterotetramer of two alpha and two beta subunits. Requires Mg(2+) as cofactor.

It carries out the reaction succinate + ATP + CoA = succinyl-CoA + ADP + phosphate. It catalyses the reaction GTP + succinate + CoA = succinyl-CoA + GDP + phosphate. The protein operates within carbohydrate metabolism; tricarboxylic acid cycle; succinate from succinyl-CoA (ligase route): step 1/1. Functionally, succinyl-CoA synthetase functions in the citric acid cycle (TCA), coupling the hydrolysis of succinyl-CoA to the synthesis of either ATP or GTP and thus represents the only step of substrate-level phosphorylation in the TCA. The beta subunit provides nucleotide specificity of the enzyme and binds the substrate succinate, while the binding sites for coenzyme A and phosphate are found in the alpha subunit. This is Succinate--CoA ligase [ADP-forming] subunit beta from Exiguobacterium sibiricum (strain DSM 17290 / CCUG 55495 / CIP 109462 / JCM 13490 / 255-15).